An 806-amino-acid polypeptide reads, in one-letter code: Exonuclease 1 (806 aa).

The tract at residues methionine 1–asparagine 99 is N-domain. Positions 30, 78, 150, 152, 171, 173, and 225 each coordinate Mg(2+). The interval arginine 138–serine 229 is I-domain. Disordered stretches follow at residues arginine 337–serine 426, histidine 443–proline 475, and glutamate 512–leucine 754. Residues arginine 355–tyrosine 378 show a composition bias toward polar residues. A compositionally biased stretch (basic and acidic residues) spans proline 412–threonine 425. 3 stretches are compositionally biased toward polar residues: residues threonine 447 to asparagine 458, serine 533 to leucine 542, and tryptophan 578 to valine 589. Residues proline 592–arginine 601 are compositionally biased toward basic and acidic residues. A compositionally biased stretch (polar residues) spans serine 602 to phenylalanine 615. The span at serine 651 to serine 670 shows a compositional bias: low complexity. Residues asparagine 676–serine 685 are compositionally biased toward basic and acidic residues. Residues valine 686–leucine 696 are compositionally biased toward low complexity. Positions lysine 744 to leucine 754 are enriched in polar residues.

It belongs to the XPG/RAD2 endonuclease family. EXO1 subfamily. Mg(2+) is required as a cofactor.

It localises to the nucleus. Functionally, 5'-&gt;3' double-stranded DNA exonuclease which may also contain a cryptic 3'-&gt;5' double-stranded DNA exonuclease activity. Also exhibits endonuclease activity against 5'-overhanging flap structures similar to those generated by displacement synthesis when DNA polymerase encounters the 5'-end of a downstream Okazaki fragment. Required for DNA mismatch repair (MMR). This chain is Exonuclease 1 (exo1), found in Danio rerio (Zebrafish).